The following is a 194-amino-acid chain: ATP-dependent Clp protease proteolytic subunit (194 aa).

Residue serine 98 is the Nucleophile of the active site. The active site involves histidine 123.

Belongs to the peptidase S14 family. Fourteen ClpP subunits assemble into 2 heptameric rings which stack back to back to give a disk-like structure with a central cavity, resembling the structure of eukaryotic proteasomes.

It localises to the cytoplasm. It carries out the reaction Hydrolysis of proteins to small peptides in the presence of ATP and magnesium. alpha-casein is the usual test substrate. In the absence of ATP, only oligopeptides shorter than five residues are hydrolyzed (such as succinyl-Leu-Tyr-|-NHMec, and Leu-Tyr-Leu-|-Tyr-Trp, in which cleavage of the -Tyr-|-Leu- and -Tyr-|-Trp bonds also occurs).. Functionally, cleaves peptides in various proteins in a process that requires ATP hydrolysis. Has a chymotrypsin-like activity. Plays a major role in the degradation of misfolded proteins. This chain is ATP-dependent Clp protease proteolytic subunit, found in Wigglesworthia glossinidia brevipalpis.